Here is a 238-residue protein sequence, read N- to C-terminus: Thrombin-like enzyme AhV_TL-I (238 aa).

The region spanning 1–229 (IIGGDECNIN…HLDWIENIIA (229 aa)) is the Peptidase S1 domain. 6 disulfides stabilise this stretch: C7-C141, C28-C44, C76-C236, C120-C190, C152-C169, and C180-C205. The active-site Charge relay system is the H43. N81 is a glycosylation site (N-linked (GlcNAc...) asparagine). D88 acts as the Charge relay system in catalysis. S184 serves as the catalytic Charge relay system.

This sequence belongs to the peptidase S1 family. Snake venom subfamily. As to quaternary structure, monomer. In terms of processing, N-glycosylated at Asn-81 by a disaccharide composed of two N-acetylglucosamine (NAG). The presence of this N-glycan deforms the enzyme and Removing the carbohydrate moiety increases the esterase activity, but induces a complete loss of contractile response on mouse thoracic aorta. Expressed by the venom gland.

It localises to the secreted. Inhibited by PMSF, L-cysteine and partially by SBTI and leupeptin. Its function is as follows. Thrombin-like enzyme that shows fibrinogenolytic activity against both the Aalpha (FGA) and Bbeta (FGB) chains of bovine fibrinogen. This enzyme has poor esterolytic activity upon BAEE substrate. It induces mouse thoracic aortic ring contraction with EC(50)=147 nmol/L. It shows vasoconstrictor effects that are independent of the enzymatic activity, but related to the release of calcium ions form the calcium store, potentially through the activation of ryanodine receptors. This chain is Thrombin-like enzyme AhV_TL-I, found in Gloydius halys (Chinese water mocassin).